Here is a 289-residue protein sequence, read N- to C-terminus: Phosphatidylserine decarboxylase proenzyme (289 aa).

Residues Asp92, His149, and Ser254 each act as charge relay system; for autoendoproteolytic cleavage activity in the active site. The active-site Schiff-base intermediate with substrate; via pyruvic acid; for decarboxylase activity is the Ser254. Ser254 is modified (pyruvic acid (Ser); by autocatalysis).

This sequence belongs to the phosphatidylserine decarboxylase family. PSD-B subfamily. Prokaryotic type I sub-subfamily. As to quaternary structure, heterodimer of a large membrane-associated beta subunit and a small pyruvoyl-containing alpha subunit. Pyruvate serves as cofactor. Is synthesized initially as an inactive proenzyme. Formation of the active enzyme involves a self-maturation process in which the active site pyruvoyl group is generated from an internal serine residue via an autocatalytic post-translational modification. Two non-identical subunits are generated from the proenzyme in this reaction, and the pyruvate is formed at the N-terminus of the alpha chain, which is derived from the carboxyl end of the proenzyme. The autoendoproteolytic cleavage occurs by a canonical serine protease mechanism, in which the side chain hydroxyl group of the serine supplies its oxygen atom to form the C-terminus of the beta chain, while the remainder of the serine residue undergoes an oxidative deamination to produce ammonia and the pyruvoyl prosthetic group on the alpha chain. During this reaction, the Ser that is part of the protease active site of the proenzyme becomes the pyruvoyl prosthetic group, which constitutes an essential element of the active site of the mature decarboxylase.

The protein localises to the cell membrane. It catalyses the reaction a 1,2-diacyl-sn-glycero-3-phospho-L-serine + H(+) = a 1,2-diacyl-sn-glycero-3-phosphoethanolamine + CO2. It participates in phospholipid metabolism; phosphatidylethanolamine biosynthesis; phosphatidylethanolamine from CDP-diacylglycerol: step 2/2. In terms of biological role, catalyzes the formation of phosphatidylethanolamine (PtdEtn) from phosphatidylserine (PtdSer). The polypeptide is Phosphatidylserine decarboxylase proenzyme (Pseudomonas paraeruginosa (strain DSM 24068 / PA7) (Pseudomonas aeruginosa (strain PA7))).